We begin with the raw amino-acid sequence, 114 residues long: Flagellar hook-basal body complex protein FliE (114 aa).

Belongs to the FliE family.

The protein localises to the bacterial flagellum basal body. The protein is Flagellar hook-basal body complex protein FliE of Desulfitobacterium hafniense (strain Y51).